We begin with the raw amino-acid sequence, 98 residues long: NADH-ubiquinone oxidoreductase chain 4L (98 aa).

3 helical membrane passes run 1 to 21 (MASI…GVLI), 26 to 46 (LMST…MMTL), and 59 to 79 (APLI…ALLV).

Belongs to the complex I subunit 4L family. Core subunit of respiratory chain NADH dehydrogenase (Complex I) which is composed of 45 different subunits.

The protein localises to the mitochondrion inner membrane. It carries out the reaction a ubiquinone + NADH + 5 H(+)(in) = a ubiquinol + NAD(+) + 4 H(+)(out). Its function is as follows. Core subunit of the mitochondrial membrane respiratory chain NADH dehydrogenase (Complex I) which catalyzes electron transfer from NADH through the respiratory chain, using ubiquinone as an electron acceptor. Part of the enzyme membrane arm which is embedded in the lipid bilayer and involved in proton translocation. This chain is NADH-ubiquinone oxidoreductase chain 4L (MT-ND4L), found in Caenolestes fuliginosus (Shrew opossum).